A 202-amino-acid polypeptide reads, in one-letter code: Inosine triphosphate pyrophosphatase (202 aa).

Residue 8–13 coordinates ITP; it reads TGNANK. Glutamate 55 contacts Mg(2+). ITP is bound by residues lysine 67, 83 to 84, lysine 100, 159 to 162, lysine 182, and 187 to 188; these read DT, FGWD, and HR.

It belongs to the HAM1 NTPase family. In terms of assembly, homodimer. It depends on Mg(2+) as a cofactor. The cofactor is Mn(2+).

Its subcellular location is the cytoplasm. It localises to the nucleus. It catalyses the reaction ITP + H2O = IMP + diphosphate + H(+). The catalysed reaction is dITP + H2O = dIMP + diphosphate + H(+). The enzyme catalyses XTP + H2O = XMP + diphosphate + H(+). Pyrophosphatase that hydrolyzes non-canonical purine nucleotides such as inosine triphosphate (ITP), deoxyinosine triphosphate (dITP) or xanthosine 5'-triphosphate (XTP) to their respective monophosphate derivatives. The enzyme does not distinguish between the deoxy- and ribose forms. Probably excludes non-canonical purines from RNA and DNA precursor pools, thus preventing their incorporation into RNA and DNA and avoiding chromosomal lesions. The chain is Inosine triphosphate pyrophosphatase from Candida albicans (strain SC5314 / ATCC MYA-2876) (Yeast).